Here is a 520-residue protein sequence, read N- to C-terminus: Phosphoenolpyruvate carboxykinase (ATP) (520 aa).

Positions 61, 196, and 202 each coordinate substrate. ATP contacts are provided by residues lysine 202, histidine 222, and 238 to 246 (GLSGTGKTT). 2 residues coordinate Mn(2+): lysine 202 and histidine 222. Aspartate 259 lines the Mn(2+) pocket. ATP contacts are provided by residues glutamate 287, arginine 324, 443 to 444 (RI), and threonine 449. Arginine 324 contributes to the substrate binding site.

Belongs to the phosphoenolpyruvate carboxykinase (ATP) family. Requires Mn(2+) as cofactor.

It is found in the cytoplasm. It catalyses the reaction oxaloacetate + ATP = phosphoenolpyruvate + ADP + CO2. Its pathway is carbohydrate biosynthesis; gluconeogenesis. Its function is as follows. Involved in the gluconeogenesis. Catalyzes the conversion of oxaloacetate (OAA) to phosphoenolpyruvate (PEP) through direct phosphoryl transfer between the nucleoside triphosphate and OAA. In Amoebophilus asiaticus (strain 5a2), this protein is Phosphoenolpyruvate carboxykinase (ATP).